The chain runs to 311 residues: CARD domain-containing protein E10 (311 aa).

The region spanning 21–110 (IWDVERLCLE…EHLVDLLERA (90 aa)) is the CARD domain. Disordered regions lie at residues 125–181 (ESGA…GGVY), 203–230 (GAGR…GGRD), and 243–311 (IPEP…FFCC). Residues 140 to 152 (EDNSGYTALLPTN) are compositionally biased toward polar residues. The span at 252-272 (SGGGGRGGGVRYDAGGDGRLG) shows a compositional bias: gly residues.

Its subcellular location is the host cell membrane. Activates host NF-kappa-B and JNK pathways. Induces hyperphosphorylation and redistribution of host bcl-10 from the cytoplasm to the plasma membrane. The inhibitory effect of cellular bcl-10 on NF-kappa-B pathway is then overcome allowing NF-kappa-B activation. The chain is CARD domain-containing protein E10 (E10) from Equus caballus (Horse).